We begin with the raw amino-acid sequence, 516 residues long: MASFSLPHSATYFPSHSETSLKPHSAASFTVRCTSASPAVPPQTPQKPRRSPDENIRDEARRRPHQLQNLSARYVPFNAPPSSTESYSLDEIVYRSQSGALLDVQHDFAALKRYDGEFWRNLFDSRVGKTNWPYGSGVWSKKEWVLPEIDDDDIVSAFEGNSNLFWAERFGKQYLQMNDLWVKHCGISHTGSFKDLGMSVLVSQVNRLRKMNKPVIGVGCASTGDTSAALSAYCASAGIPSIVFLPADKISMAQLVQPIANGAFVLSIDTDFDGCMHLIREVTAELPIYLANSLNSLRLEGQKTAAIEILQQFNWQVPDWVIVPGGNLGNIYAFYKGFHMCKELGLVDRIPRLVCAQAANANPLYLHYKSGFKEDFNPLKANTTFASAIQIGDPVSIDRAVYALKKSNGIVEEATEEELMDATALADSTGMFICPHTGVALTALMKLRKSGVIGANDRTVVVSTAHGLKFTQSKIDYHSKNIKEMACRLANPPVKVKAKFGSVMDVLKEYLKSNDK.

The N-terminal 33 residues, 1–33, are a transit peptide targeting the chloroplast; that stretch reads MASFSLPHSATYFPSHSETSLKPHSAASFTVRC. The segment covering 1–37 has biased composition (polar residues); sequence MASFSLPHSATYFPSHSETSLKPHSAASFTVRCTSAS. Positions 1 to 55 are disordered; that stretch reads MASFSLPHSATYFPSHSETSLKPHSAASFTVRCTSASPAVPPQTPQKPRRSPDEN. S-adenosyl-L-methionine is bound by residues 133–135, 156–158, Asn163, Leu164, Lys172, and Asn178; these read PYG and SAF. Position 194 is an N6-(pyridoxal phosphate)lysine (Lys194). Residues 326–330 and Thr464 contribute to the pyridoxal 5'-phosphate site; that span reads GNLGN.

It belongs to the threonine synthase family. Homodimer. Requires pyridoxal 5'-phosphate as cofactor.

It localises to the plastid. The protein localises to the chloroplast. It catalyses the reaction O-phospho-L-homoserine + H2O = L-threonine + phosphate. It participates in amino-acid biosynthesis; L-threonine biosynthesis; L-threonine from L-aspartate: step 5/5. Allosterically activated by S-adenosyl-methionine (SAM). Functionally, catalyzes the gamma-elimination of phosphate from L-phosphohomoserine and the beta-addition of water to produce L-threonine. This is Threonine synthase 2, chloroplastic (TS2) from Arabidopsis thaliana (Mouse-ear cress).